Reading from the N-terminus, the 855-residue chain is Valine--tRNA ligase (855 aa).

Positions 44 to 54 match the 'HIGH' region motif; it reads PNVTGVLHIGH. The 'KMSKS' region signature appears at 524 to 528; the sequence is KMSKT. Lysine 527 provides a ligand contact to ATP. Residues 797–827 are a coiled coil; that stretch reads KVEEDPARKQKEREQLEKNIANSKRQLGDEV.

Belongs to the class-I aminoacyl-tRNA synthetase family. ValS type 1 subfamily. As to quaternary structure, monomer.

The protein resides in the cytoplasm. The catalysed reaction is tRNA(Val) + L-valine + ATP = L-valyl-tRNA(Val) + AMP + diphosphate. In terms of biological role, catalyzes the attachment of valine to tRNA(Val). As ValRS can inadvertently accommodate and process structurally similar amino acids such as threonine, to avoid such errors, it has a 'posttransfer' editing activity that hydrolyzes mischarged Thr-tRNA(Val) in a tRNA-dependent manner. The polypeptide is Valine--tRNA ligase (Solibacter usitatus (strain Ellin6076)).